We begin with the raw amino-acid sequence, 535 residues long: Bifunctional purine biosynthesis protein PurH (535 aa).

The region spanning Thr6 to Val151 is the MGS-like domain.

The protein belongs to the PurH family.

It catalyses the reaction (6R)-10-formyltetrahydrofolate + 5-amino-1-(5-phospho-beta-D-ribosyl)imidazole-4-carboxamide = 5-formamido-1-(5-phospho-D-ribosyl)imidazole-4-carboxamide + (6S)-5,6,7,8-tetrahydrofolate. It carries out the reaction IMP + H2O = 5-formamido-1-(5-phospho-D-ribosyl)imidazole-4-carboxamide. It functions in the pathway purine metabolism; IMP biosynthesis via de novo pathway; 5-formamido-1-(5-phospho-D-ribosyl)imidazole-4-carboxamide from 5-amino-1-(5-phospho-D-ribosyl)imidazole-4-carboxamide (10-formyl THF route): step 1/1. It participates in purine metabolism; IMP biosynthesis via de novo pathway; IMP from 5-formamido-1-(5-phospho-D-ribosyl)imidazole-4-carboxamide: step 1/1. This chain is Bifunctional purine biosynthesis protein PurH, found in Pseudomonas putida (strain GB-1).